Reading from the N-terminus, the 189-residue chain is Accessory gene regulator protein B (189 aa).

5 helical membrane passes run 50-70 (VSLL…FFFI), 83-103 (LLCY…VGYV), 105-125 (VSSL…SIYA), 143-163 (KIKA…LNEP), and 164-184 (YQQL…PIFF).

The protein belongs to the AgrB family.

It is found in the cell membrane. In terms of biological role, essential for the production of a quorum sensing system signal molecule, the autoinducing peptide (AIP). This quorum sensing system is responsible for the regulation of the expression of virulence factor genes. Involved in the proteolytic processing of AgrD, the precursor of AIP. The polypeptide is Accessory gene regulator protein B (Staphylococcus saprophyticus subsp. saprophyticus (strain ATCC 15305 / DSM 20229 / NCIMB 8711 / NCTC 7292 / S-41)).